A 123-amino-acid polypeptide reads, in one-letter code: UPF0102 protein PFL_5073 (123 aa).

The protein belongs to the UPF0102 family.

The protein is UPF0102 protein PFL_5073 of Pseudomonas fluorescens (strain ATCC BAA-477 / NRRL B-23932 / Pf-5).